We begin with the raw amino-acid sequence, 1988 residues long: Protein Ycf2 (1988 aa).

1337–1344 (GSIGTGRS) contacts ATP. The tract at residues 1377 to 1396 (SDDDSDDIDDSGDIDDSDDI) is disordered.

Belongs to the Ycf2 family.

Its subcellular location is the plastid. It is found in the chloroplast stroma. Probable ATPase of unknown function. Its presence in a non-photosynthetic plant (Epifagus virginiana) and experiments in tobacco indicate that it has an essential function which is probably not related to photosynthesis. The chain is Protein Ycf2 from Cucumis sativus (Cucumber).